The primary structure comprises 491 residues: Probable protein phosphatase 2C 6 (491 aa).

Residues 1–16 (MGLCHSKIDKTTRKET) are compositionally biased toward basic and acidic residues. Positions 1-39 (MGLCHSKIDKTTRKETGATSTATTTVERQSSGRLRRPRD) are disordered. The span at 17–28 (GATSTATTTVER) shows a compositional bias: low complexity. The 313-residue stretch at 64–376 (IACLYTQQGK…DDCAVVCLFL (313 aa)) folds into the PPM-type phosphatase domain. Mn(2+)-binding residues include Asp-100, Gly-101, Asp-321, and Asp-367. A disordered region spans residues 391–422 (VNHSHEESTESVTITSSKDADKKEEASTETNE).

Belongs to the PP2C family. Mg(2+) is required as a cofactor. The cofactor is Mn(2+).

The catalysed reaction is O-phospho-L-seryl-[protein] + H2O = L-seryl-[protein] + phosphate. It carries out the reaction O-phospho-L-threonyl-[protein] + H2O = L-threonyl-[protein] + phosphate. The sequence is that of Probable protein phosphatase 2C 6 from Arabidopsis thaliana (Mouse-ear cress).